Here is a 213-residue protein sequence, read N- to C-terminus: Glutathione S-transferase DHAR1, mitochondrial (213 aa).

The glutathione site is built by K8 and D19. Residues K8 and D19 each coordinate L-ascorbate. The 74-residue stretch at 10-83 (AVGAPDHLGD…DVIVGILEEK (74 aa)) folds into the GST N-terminal domain. C20 functions as the Nucleophile in the catalytic mechanism. Residue C20 is modified to S-glutathionyl cysteine. The Glutathione-binding motif lies at 20 to 25 (CPFSQR). The glutathione site is built by K47, V60, and S73. Residues 84–213 (YPDPPLKTPA…ISGWAPKVNP (130 aa)) form the GST C-terminal domain. The short motif at 133 to 137 (HLKSH) is the Copper-binding element. 2 residues coordinate glutathione: H160 and W207. K210 lines the L-ascorbate pocket.

The protein belongs to the GST superfamily. DHAR family. Monomer. Interacts with copper (Cu). In terms of processing, spontaneous S-glutathionylation in the presence of oxidized glutathione (GSSG). In terms of tissue distribution, expressed at least in roots and leaves.

The protein resides in the mitochondrion. Its subcellular location is the cytoplasm. It localises to the cytosol. The protein localises to the peroxisome. It is found in the membrane. The enzyme catalyses RX + glutathione = an S-substituted glutathione + a halide anion + H(+). It catalyses the reaction L-dehydroascorbate + 2 glutathione = glutathione disulfide + L-ascorbate. Displays a dual function. As a soluble protein, exhibits glutathione-dependent thiol transferase and dehydroascorbate (DHA) reductase activities. Key component of the ascorbate recycling system. Involved in the redox homeostasis, especially in scavenging of ROS under oxidative stresses, subsequently to biotic or abiotic inducers. As a peripheral membrane protein, could also function as voltage-gated ion channel. This is Glutathione S-transferase DHAR1, mitochondrial from Arabidopsis thaliana (Mouse-ear cress).